The primary structure comprises 174 residues: Nascent polypeptide-associated complex subunit alpha (174 aa).

Ser-2 carries the post-translational modification N-acetylserine. Residues 14 to 78 (NKNEKKAREL…AKVDNFTQKL (65 aa)) enclose the NAC-A/B domain. Residues 85–137 (AQASGIMPSNEDVATKSPEDIQADMQAAAEGSVNAAAEEDDEEGEVDAGDLNK) form a disordered region. The residue at position 93 (Ser-93) is a Phosphoserine. Low complexity predominate over residues 111-120 (AAAEGSVNAA). A compositionally biased stretch (acidic residues) spans 121-132 (AEEDDEEGEVDA). The region spanning 135–174 (LNKDDIELVVQQTNVSKNQAIKALKAHNGDLVNAIMSLSK) is the UBA domain.

This sequence belongs to the NAC-alpha family. In terms of assembly, part of the nascent polypeptide-associated complex (NAC), consisting of EGD2 and either EGD1 or BTT1. NAC associates with ribosomes via EGD1 or BTT1, and with the CCR4-NOT complex.

The protein resides in the cytoplasm. It localises to the nucleus. Its function is as follows. Component of the nascent polypeptide-associated complex (NAC), a dynamic component of the ribosomal exit tunnel, protecting the emerging polypeptides from interaction with other cytoplasmic proteins to ensure appropriate nascent protein targeting. The NAC complex also promotes mitochondrial protein import by enhancing productive ribosome interactions with the outer mitochondrial membrane and blocks the inappropriate interaction of ribosomes translating non-secretory nascent polypeptides with translocation sites in the membrane of the endoplasmic reticulum. EGD2 may also be involved in transcription regulation. The sequence is that of Nascent polypeptide-associated complex subunit alpha (EGD2) from Saccharomyces cerevisiae (strain YJM789) (Baker's yeast).